A 713-amino-acid chain; its full sequence is Glutamine-dependent NAD(+) synthetase (713 aa).

The region spanning 4–275 (VTLATCNLNQ…IEVITATVDL (272 aa)) is the CN hydrolase domain. E44 acts as the Proton acceptor; for glutaminase activity in catalysis. Catalysis depends on K114, which acts as the For glutaminase activity. C175 functions as the Nucleophile; for glutaminase activity in the catalytic mechanism. The ligase stretch occupies residues 324–703 (YNTPAEEIGF…QRPQLKNTVN (380 aa)). Position 354–361 (354–361 (PLSGGADS)) interacts with ATP. S356 is an active-site residue.

It in the C-terminal section; belongs to the NAD synthetase family.

The catalysed reaction is deamido-NAD(+) + L-glutamine + ATP + H2O = L-glutamate + AMP + diphosphate + NAD(+) + H(+). Its pathway is cofactor biosynthesis; NAD(+) biosynthesis; NAD(+) from deamido-NAD(+) (L-Gln route): step 1/1. In Dictyostelium discoideum (Social amoeba), this protein is Glutamine-dependent NAD(+) synthetase (nadsyn1).